Consider the following 162-residue polypeptide: Putative pre-16S rRNA nuclease (162 aa).

This sequence belongs to the YqgF nuclease family.

The protein localises to the cytoplasm. Its function is as follows. Could be a nuclease involved in processing of the 5'-end of pre-16S rRNA. The sequence is that of Putative pre-16S rRNA nuclease from Brucella abortus (strain S19).